The sequence spans 130 residues: Small ribosomal subunit protein uS9 (130 aa).

Residues 105-130 (TRDPRMKERKKYGLKKARRAPQFSKR) are disordered. The span at 111–130 (KERKKYGLKKARRAPQFSKR) shows a compositional bias: basic residues.

Belongs to the universal ribosomal protein uS9 family.

This chain is Small ribosomal subunit protein uS9, found in Acetivibrio thermocellus (strain ATCC 27405 / DSM 1237 / JCM 9322 / NBRC 103400 / NCIMB 10682 / NRRL B-4536 / VPI 7372) (Clostridium thermocellum).